Reading from the N-terminus, the 289-residue chain is 33 kDa chaperonin (289 aa).

Disulfide bonds link cysteine 237–cysteine 239 and cysteine 270–cysteine 273.

The protein belongs to the HSP33 family. Under oxidizing conditions two disulfide bonds are formed involving the reactive cysteines. Under reducing conditions zinc is bound to the reactive cysteines and the protein is inactive.

The protein resides in the cytoplasm. In terms of biological role, redox regulated molecular chaperone. Protects both thermally unfolding and oxidatively damaged proteins from irreversible aggregation. Plays an important role in the bacterial defense system toward oxidative stress. The sequence is that of 33 kDa chaperonin from Oceanobacillus iheyensis (strain DSM 14371 / CIP 107618 / JCM 11309 / KCTC 3954 / HTE831).